A 600-amino-acid polypeptide reads, in one-letter code: Zinc metalloproteinase-disintegrin-like cobrin (600 aa).

Positions 1 to 8 are cleaved as a signal peptide; the sequence is MIQLSWSS. Residues 9-179 constitute a propeptide that is removed on maturation; it reads IILESGNVND…DEPIKKTSLL (171 aa). One can recognise a Peptidase M12B domain in the interval 193-388; sequence KYIEFYMVVD…DRPQCILNKP (196 aa). Ca(2+) contacts are provided by Glu196 and Asp280. Intrachain disulfides connect Cys304–Cys383, Cys344–Cys367, and Cys346–Cys351. Zn(2+) contacts are provided by His329, His333, and His339. The Ca(2+) site is built by Cys383, Asn386, Ile398, Asn401, Phe403, Glu405, Glu408, and Asp411. In terms of domain architecture, Disintegrin spans 396–482; that stretch reads PPICGNYFVE…ECPTDVFQRN (87 aa). 14 disulfide bridges follow: Cys399-Cys428, Cys410-Cys423, Cys412-Cys418, Cys422-Cys445, Cys436-Cys442, Cys441-Cys467, Cys454-Cys474, Cys461-Cys492, Cys486-Cys497, Cys504-Cys554, Cys519-Cys562, Cys532-Cys542, Cys549-Cys588, and Cys582-Cys593. Residue Asn424 is glycosylated (N-linked (GlcNAc...) asparagine). A D/ECD-tripeptide motif is present at residues 460 to 462; that stretch reads DCD. Positions 462, 463, 465, 477, and 478 each coordinate Ca(2+).

It belongs to the venom metalloproteinase (M12B) family. P-III subfamily. P-IIIa sub-subfamily. In terms of assembly, monomer. It depends on Zn(2+) as a cofactor. As to expression, expressed by the venom gland.

It localises to the secreted. Snake venom zinc metalloproteinase that may cleave complement protein C3 into C3c-like (C3o). In Naja kaouthia (Monocled cobra), this protein is Zinc metalloproteinase-disintegrin-like cobrin.